Reading from the N-terminus, the 443-residue chain is ATP-dependent protease ATPase subunit HslU (443 aa).

Residues isoleucine 18 and glycine 60–glutamate 65 each bind ATP. Residues aspartate 141–glutamate 165 are disordered. ATP is bound by residues aspartate 256, glutamate 321, and arginine 393.

The protein belongs to the ClpX chaperone family. HslU subfamily. In terms of assembly, a double ring-shaped homohexamer of HslV is capped on each side by a ring-shaped HslU homohexamer. The assembly of the HslU/HslV complex is dependent on binding of ATP.

It is found in the cytoplasm. ATPase subunit of a proteasome-like degradation complex; this subunit has chaperone activity. The binding of ATP and its subsequent hydrolysis by HslU are essential for unfolding of protein substrates subsequently hydrolyzed by HslV. HslU recognizes the N-terminal part of its protein substrates and unfolds these before they are guided to HslV for hydrolysis. The sequence is that of ATP-dependent protease ATPase subunit HslU from Photobacterium profundum (strain SS9).